We begin with the raw amino-acid sequence, 345 residues long: Phosphoribosylformylglycinamidine cyclo-ligase (345 aa).

It belongs to the AIR synthase family.

It localises to the cytoplasm. The enzyme catalyses 2-formamido-N(1)-(5-O-phospho-beta-D-ribosyl)acetamidine + ATP = 5-amino-1-(5-phospho-beta-D-ribosyl)imidazole + ADP + phosphate + H(+). Its pathway is purine metabolism; IMP biosynthesis via de novo pathway; 5-amino-1-(5-phospho-D-ribosyl)imidazole from N(2)-formyl-N(1)-(5-phospho-D-ribosyl)glycinamide: step 2/2. This is Phosphoribosylformylglycinamidine cyclo-ligase from Synechococcus sp. (strain CC9605).